The following is a 556-amino-acid chain: Urocanate hydratase (556 aa).

NAD(+) contacts are provided by residues 52–53, Gln-130, 176–178, Glu-196, Arg-201, 242–243, 263–267, 273–274, and Tyr-322; these read GG, GMG, NA, QTSAH, and YL. Cys-410 is an active-site residue. Gly-492 provides a ligand contact to NAD(+).

It belongs to the urocanase family. The cofactor is NAD(+).

The protein resides in the cytoplasm. The catalysed reaction is 4-imidazolone-5-propanoate = trans-urocanate + H2O. It functions in the pathway amino-acid degradation; L-histidine degradation into L-glutamate; N-formimidoyl-L-glutamate from L-histidine: step 2/3. Its function is as follows. Catalyzes the conversion of urocanate to 4-imidazolone-5-propionate. The chain is Urocanate hydratase from Shewanella sp. (strain ANA-3).